The following is a 39-amino-acid chain: LIM/homeobox protein xLIM-2B (39 aa).

A DNA-binding region (homeobox) is located at residues 1–39; sequence KAKQLETLKAAFAATPKPTRHIREQLAQETGLNMRVIQV.

Its subcellular location is the nucleus. The chain is LIM/homeobox protein xLIM-2B (lim2b) from Xenopus laevis (African clawed frog).